The chain runs to 110 residues: V-type proton ATPase subunit F (110 aa).

Belongs to the V-ATPase F subunit family. V-ATPase is a heteromultimeric enzyme made up of two complexes: the ATP-hydrolytic V1 complex and the proton translocation V0 complex. The V1 complex consists of three catalytic AB heterodimers that form a heterohexamer, three peripheral stalks each consisting of EG heterodimers, one central rotor including subunits D and F, and the regulatory subunits C and H. The proton translocation complex V0 consists of the proton transport subunit a, a ring of proteolipid subunits c9c'', rotary subunit d, subunits e and f, and two accessory subunits.

Subunit of the V1 complex of vacuolar(H+)-ATPase (V-ATPase), a multisubunit enzyme composed of a peripheral complex (V1) that hydrolyzes ATP and a membrane integral complex (V0) that translocates protons. V-ATPase is responsible for acidifying and maintaining the pH of intracellular compartments and in some cell types, is targeted to the plasma membrane, where it is responsible for acidifying the extracellular environment. The sequence is that of V-type proton ATPase subunit F (atp6s14) from Xenopus laevis (African clawed frog).